A 127-amino-acid polypeptide reads, in one-letter code: Large ribosomal subunit protein bL17 (127 aa).

The protein belongs to the bacterial ribosomal protein bL17 family. As to quaternary structure, part of the 50S ribosomal subunit. Contacts protein L32.

The sequence is that of Large ribosomal subunit protein bL17 from Enterococcus faecalis (strain ATCC 700802 / V583).